A 288-amino-acid chain; its full sequence is Glandicoline B O-methyltransferase roqN (288 aa).

S-adenosyl-L-methionine-binding positions include Thr57, Asp82, and 109 to 110; that span reads DA.

Belongs to the class I-like SAM-binding methyltransferase superfamily.

The catalysed reaction is glandicoline B + S-adenosyl-L-methionine = meleagrin + S-adenosyl-L-homocysteine + H(+). It functions in the pathway alkaloid biosynthesis. Functionally, glandicoline B O-methyltransferase; part of the gene cluster that mediates the biosynthesis of the mycotoxin meleagrin. The first stage is catalyzed by the dipeptide synthase roqA which condenses histidine and tryptophan to produce histidyltryptophanyldiketopiperazine (HTD). HTD is then converted to roquefortine C through two possible pathways. In the first pathway, prenyltransferase roqD transforms HTD to the intermediate roquefortine D, which is in turn converted to roquefortine C by the cytochrome P450 monooxygenase roqR. In the second pathway, HTD is first converted to the intermediate dehydrohistidyltryptophanyldi-ketopiperazine (DHTD) by roqR which is then prenylated by roqD to form roquefortine C. Roquefortine C can be further transformed to meleagrin via three more reactions including oxydation to glandicolin A by roqM, which is further reduced to glandicoline B by roqO. Finally, glandicoline B is converted to meleagrin by the glandicoline B O-methyltransferase roqN. More studies identified further branching and additional metabolites produced by the roquefortine/meleagrin cluster, including roquefortine F, roquefortine L, roquefortine M, roquefortine N and neoxaline. The chain is Glandicoline B O-methyltransferase roqN from Penicillium rubens (strain ATCC 28089 / DSM 1075 / NRRL 1951 / Wisconsin 54-1255) (Penicillium chrysogenum).